Consider the following 525-residue polypeptide: MRFLRFLKIFFTVIRFGLDEMMLSRVNDRRVRLLLRITTIGRKFDAPPGVRLRLALESLGPIFVKFGQVLSTRRDLLPVDIANELAKLQDQVPPFDSAVAIGLVEKSLGAPVDVLFDDFERVPVASASIAQVHFATVKAGQHAGKAVAVKVLRPNMLPVIDSDLALLRDIAVWAERLWADGKRLKPREVVAEFDKYLHDELDLMREAANGSQLRRNFAGLDLLLVPEMYWEFCTPTVLVMERMVGVPISQVETLRAAGVDIPKLAREGVEIFFTQVFRDGFFHADMHPGNIQVSLDPAHFGRYIALDFGIIGALSDFDKNYLAQNFLAFFKRDYHRVATLHLESGWVPPTTRVEELESAIRAVCEPYFDRALKDISLGQVLMRLFSTSRRFNVEIQPQLVLLQKTMLNVEGLGRSLDPELDLWKTAKPYLERWMNEQIGLRGWYERLKIEAPQWSKTLPQLPRLIHHALAERHDHTRGANDEMIRQILLEQKRTNRLLQGLLLFGVAVGVGAALARVFLALAYGG.

In terms of domain architecture, Protein kinase spans 118-500; that stretch reads DFERVPVASA…QKRTNRLLQG (383 aa). Residues 124 to 132 and lysine 150 each bind ATP; that span reads VASASIAQV. Aspartate 285 serves as the catalytic Proton acceptor. The chain crosses the membrane as a helical span at residues 501-521; that stretch reads LLLFGVAVGVGAALARVFLAL.

It belongs to the ABC1 family. UbiB subfamily.

It is found in the cell inner membrane. It participates in cofactor biosynthesis; ubiquinone biosynthesis [regulation]. Is probably a protein kinase regulator of UbiI activity which is involved in aerobic coenzyme Q (ubiquinone) biosynthesis. This Paraburkholderia xenovorans (strain LB400) protein is Probable protein kinase UbiB.